We begin with the raw amino-acid sequence, 488 residues long: Facilitated trehalose transporter Tret1-2 homolog (488 aa).

Topologically, residues 1–28 (MKILMRADTHVSYSVPAEGTKANFTFSQ) are cytoplasmic. A helical transmembrane segment spans residues 29 to 49 (VLAALSVSLCSLVVGFVSAYT). Topologically, residues 50 to 72 (SPALVSMTDRTITSFEVTKDAGS) are extracellular. A helical membrane pass occupies residues 73–93 (WVGGIMPLAALAGGITGGPLI). The Cytoplasmic segment spans residues 94–105 (EYLGRRNTILAT). A helical membrane pass occupies residues 106 to 126 (AVPFIVSSLLIACAVNVIMIL). Residues 127-129 (CGR) lie on the Extracellular side of the membrane. Residues 130-150 (FLTGFCVGIASLSLPVYLGET) form a helical membrane-spanning segment. Residues 151–160 (LQPEVRGTLG) are Cytoplasmic-facing. A helical transmembrane segment spans residues 161-181 (LLPTALGNIGILVCYVAGSFM). Residue asparagine 182 is glycosylated (N-linked (GlcNAc...) asparagine). The Extracellular portion of the chain corresponds to 182 to 184 (NWS). Residues 185–205 (ILAFLGAALPVPFLILMIIIP) traverse the membrane as a helical segment. Residues 206 to 268 (ETPRWFVNRG…ELFKRINLKP (63 aa)) lie on the Cytoplasmic side of the membrane. Residues 269–289 (LSISLGLMFFQQFSGINAVIF) form a helical membrane-spanning segment. Topologically, residues 290–305 (YTVQIFKDAGSTIDSN) are extracellular. The chain crosses the membrane as a helical span at residues 306–326 (LCTIIVGIVNFFATFMGIILI). The Cytoplasmic segment spans residues 327 to 332 (DRLGRK). Residues 333–353 (ILLYVSDIAMILTLSILGGFF) traverse the membrane as a helical segment. Topologically, residues 354–372 (YCKAHGPDVSHLGWLPLSC) are extracellular. A helical membrane pass occupies residues 373-393 (FVIYILGFSLGFGPIPWLMMG). Over 394–402 (EILPAKIRG) the chain is Cytoplasmic. The chain crosses the membrane as a helical span at residues 403–423 (PAASVVTAFNWFCTFVVTKTF). Residues 424–433 (QDLTVAMGPH) lie on the Extracellular side of the membrane. A helical membrane pass occupies residues 434 to 454 (GAFWLFGVVCIVGLFFVIIYV). Topologically, residues 455-488 (PETRGKSLEEIERKMMGRVPISAVVNIKPFSFNM) are cytoplasmic.

The protein belongs to the major facilitator superfamily. Sugar transporter (TC 2.A.1.1) family. Trehalose transporter subfamily.

Its subcellular location is the cell membrane. Functionally, fails to transport trehalose. The polypeptide is Facilitated trehalose transporter Tret1-2 homolog (Drosophila sechellia (Fruit fly)).